The chain runs to 92 residues: Antifungal protein B (92 aa).

The signal sequence occupies residues 1–18; that stretch reads MHITSIAIVFFAAMGAVA. Positions 19–34 are excised as a propeptide; the sequence is SPIATESDDLDARDVQ. 3 disulfide bridges follow: C42–C70, C49–C77, and C62–C88.

It belongs to the antifungal protein pafB family.

The protein localises to the secreted. It is found in the host cytoplasm. In terms of biological role, antifungal protein that acts as an inhibitor of growth of human pathogenic molds and yeasts. The chain is Antifungal protein B from Penicillium rubens (strain ATCC 28089 / DSM 1075 / NRRL 1951 / Wisconsin 54-1255) (Penicillium chrysogenum).